The following is a 252-amino-acid chain: 5-oxoprolinase subunit A (252 aa).

It belongs to the LamB/PxpA family. In terms of assembly, forms a complex composed of PxpA, PxpB and PxpC.

It carries out the reaction 5-oxo-L-proline + ATP + 2 H2O = L-glutamate + ADP + phosphate + H(+). Functionally, catalyzes the cleavage of 5-oxoproline to form L-glutamate coupled to the hydrolysis of ATP to ADP and inorganic phosphate. The chain is 5-oxoprolinase subunit A from Mycobacterium ulcerans (strain Agy99).